Reading from the N-terminus, the 530-residue chain is CTP synthase (530 aa).

The amidoligase domain stretch occupies residues 1–267; the sequence is MTKYVFVTGG…DDFVLNHFKM (267 aa). Serine 13 contributes to the CTP binding site. Residue serine 13 participates in UTP binding. 14–19 contacts ATP; sequence SLGKGI. Tyrosine 54 is a binding site for L-glutamine. Aspartate 71 contacts ATP. Residues aspartate 71 and glutamate 141 each contribute to the Mg(2+) site. CTP contacts are provided by residues 148-150, 188-193, and lysine 224; these read DIE and KTKPTQ. Residues 188 to 193 and lysine 224 each bind UTP; that span reads KTKPTQ. 240–242 contributes to the ATP binding site; the sequence is RDA. The 239-residue stretch at 292–530 folds into the Glutamine amidotransferase type-1 domain; the sequence is KIALVGKYIE…LFKAFIGATM (239 aa). Glycine 354 provides a ligand contact to L-glutamine. Catalysis depends on cysteine 381, which acts as the Nucleophile; for glutamine hydrolysis. L-glutamine is bound by residues 382–385, glutamate 405, and arginine 463; that span reads LGMQ. Residues histidine 508 and glutamate 510 contribute to the active site.

This sequence belongs to the CTP synthase family. In terms of assembly, homotetramer.

It catalyses the reaction UTP + L-glutamine + ATP + H2O = CTP + L-glutamate + ADP + phosphate + 2 H(+). It carries out the reaction L-glutamine + H2O = L-glutamate + NH4(+). The enzyme catalyses UTP + NH4(+) + ATP = CTP + ADP + phosphate + 2 H(+). It participates in pyrimidine metabolism; CTP biosynthesis via de novo pathway; CTP from UDP: step 2/2. With respect to regulation, allosterically activated by GTP, when glutamine is the substrate; GTP has no effect on the reaction when ammonia is the substrate. The allosteric effector GTP functions by stabilizing the protein conformation that binds the tetrahedral intermediate(s) formed during glutamine hydrolysis. Inhibited by the product CTP, via allosteric rather than competitive inhibition. Its function is as follows. Catalyzes the ATP-dependent amination of UTP to CTP with either L-glutamine or ammonia as the source of nitrogen. Regulates intracellular CTP levels through interactions with the four ribonucleotide triphosphates. The protein is CTP synthase of Latilactobacillus sakei subsp. sakei (strain 23K) (Lactobacillus sakei subsp. sakei).